Reading from the N-terminus, the 754-residue chain is Condensin complex subunit 2 (754 aa).

Residues 104-149 form a disordered region; the sequence is LAQRKTNGASNGDDSNGGNGEGLGGDSDEANIEIDPLTGMPISNDP. Positions 118–128 are enriched in gly residues; the sequence is SNGGNGEGLGG. Ser-245 is subject to Phosphoserine. Positions 359–379 are disordered; the sequence is CYPDENHDNTSHDEQDDDNVN. Over residues 362 to 371 the composition is skewed to basic and acidic residues; the sequence is DENHDNTSHD. At Ser-548 the chain carries Phosphoserine. The tract at residues 665 to 688 is disordered; it reads HDSRKNREQSSNDSETHTEDESTK.

Belongs to the CND2 (condensin subunit 2) family. In terms of assembly, component of the condensin complex, which contains the SMC2 and SMC4 heterodimer, and three non SMC subunits that probably regulate the complex: BRN1, YCS4 and YCG1/YCS5.

Its subcellular location is the nucleus. The protein resides in the cytoplasm. It localises to the chromosome. Its function is as follows. Regulatory subunit of the condensin complex, a complex required for conversion of interphase chromatin into mitotic-like condense chromosomes. The condensin complex probably introduces positive supercoils into relaxed DNA in the presence of type I topoisomerases and converts nicked DNA into positive knotted forms in the presence of type II topoisomerases. The condensin complex probably also plays a role during interphase. In Saccharomyces cerevisiae (strain ATCC 204508 / S288c) (Baker's yeast), this protein is Condensin complex subunit 2 (BRN1).